Consider the following 375-residue polypeptide: RING-H2 finger protein ATL16 (375 aa).

Positions 1–20 (MDLSNRRNPLRDLSFPPPPP) are disordered. A helical membrane pass occupies residues 39–59 (VAVIGILATAFLLVSYYVFVI). An RING-type; atypical zinc finger spans residues 138-180 (CSVCLSEFQDEEKLRIIPNCSHLFHIDCIDVWLQNNANCPLCR). 2 disordered regions span residues 223 to 266 (GSDR…DRGG) and 356 to 375 (SFGS…YFEP). Positions 238-257 (QERSNSGYLLNENTQNSISP) are enriched in polar residues.

It belongs to the RING-type zinc finger family. ATL subfamily.

It localises to the membrane. The catalysed reaction is S-ubiquitinyl-[E2 ubiquitin-conjugating enzyme]-L-cysteine + [acceptor protein]-L-lysine = [E2 ubiquitin-conjugating enzyme]-L-cysteine + N(6)-ubiquitinyl-[acceptor protein]-L-lysine.. The protein operates within protein modification; protein ubiquitination. This Arabidopsis thaliana (Mouse-ear cress) protein is RING-H2 finger protein ATL16 (ATL16).